Consider the following 309-residue polypeptide: Sulfate adenylyltransferase subunit 2 (309 aa).

Belongs to the PAPS reductase family. CysD subfamily. In terms of assembly, heterodimer composed of CysD, the smaller subunit, and CysN.

It carries out the reaction sulfate + ATP + H(+) = adenosine 5'-phosphosulfate + diphosphate. The protein operates within sulfur metabolism; hydrogen sulfide biosynthesis; sulfite from sulfate: step 1/3. Its function is as follows. With CysN forms the ATP sulfurylase (ATPS) that catalyzes the adenylation of sulfate producing adenosine 5'-phosphosulfate (APS) and diphosphate, the first enzymatic step in sulfur assimilation pathway. APS synthesis involves the formation of a high-energy phosphoric-sulfuric acid anhydride bond driven by GTP hydrolysis by CysN coupled to ATP hydrolysis by CysD. This is Sulfate adenylyltransferase subunit 2 from Methylorubrum extorquens (strain CM4 / NCIMB 13688) (Methylobacterium extorquens).